A 409-amino-acid polypeptide reads, in one-letter code: Glycinol 4-dimethylallyltransferase (409 aa).

The N-terminal 44 residues, 1 to 44 (MDWGLAISSHPKPYSVTTGGNLWRSKHTTKNIYFASSWISKASR), are a transit peptide targeting the chloroplast. 9 consecutive transmembrane segments (helical) span residues 113-133 (LSAFYWFSYPYTMIGITLCAF), 148-168 (LSFLIGVLQGVLPQLFIEIYL), 200-220 (VIISAAFLALSFGFTWITGSW), 222-242 (LICNLVVIASSWTAYSIDVPL), 249-269 (PFVAAMCMISTWALALPISYF), 287-307 (LGFLVAFMTFYSLGLALSKDI), 330-350 (AFWICVSFFEMAFGVGILAGA), 354-374 (HFWTKIFTGMGNAVLASILWY), and 388-408 (GSFYMFIWKLLYAGFFLMALI).

Belongs to the UbiA prenyltransferase family. Mg(2+) serves as cofactor. The cofactor is Mn(2+). Co(2+) is required as a cofactor.

The protein resides in the plastid. It is found in the chloroplast membrane. The catalysed reaction is (6aS,11aS)-3,6a,9-trihydroxypterocarpan + dimethylallyl diphosphate = (6aS,11aS)-2-dimethylallyl-3,6a,9-trihydroxypterocarpan + diphosphate. It catalyses the reaction (6aS,11aS)-3,6a,9-trihydroxypterocarpan + dimethylallyl diphosphate = (6aS,11aS)-4-dimethylallyl-3,6a,9-trihydroxypterocarpan + diphosphate. The protein operates within phytoalexin biosynthesis; pterocarpan phytoalexin biosynthesis. Functionally, proposed to be involved in the biosynthesis of pterocarpan phytoalexins, specifically glyceollins. Can act as a prenyltransferase towards glycinol which is the direct precursor of glyceollins. Seems to be specific for prenylation at C-4 thus producing glyceollin I. The chain is Glycinol 4-dimethylallyltransferase (G4DT) from Glycine max (Soybean).